A 203-amino-acid chain; its full sequence is Probable proteasome subunit beta type-1 (203 aa).

A propeptide spans 1–10 (MMSNEKEMTG) (removed in mature form). T11 acts as the Nucleophile in catalysis.

It belongs to the peptidase T1B family. In terms of assembly, the 26S proteasome consists of a 20S proteasome core and two 19S regulatory subunits. The 20S proteasome core is composed of 28 subunits that are arranged in four stacked rings, resulting in a barrel-shaped structure. The two end rings are each formed by seven alpha subunits, and the two central rings are each formed by seven beta subunits. The catalytic chamber with the active sites is on the inside of the barrel.

The protein localises to the cytoplasm. Its subcellular location is the nucleus. The catalysed reaction is Cleavage of peptide bonds with very broad specificity.. Functionally, the proteasome degrades poly-ubiquitinated proteins in the cytoplasm and in the nucleus. It is essential for the regulated turnover of proteins and for the removal of misfolded proteins. The proteasome is a multicatalytic proteinase complex that is characterized by its ability to cleave peptides with Arg, Phe, Tyr, Leu, and Glu adjacent to the leaving group at neutral or slightly basic pH. It has an ATP-dependent proteolytic activity. In Encephalitozoon cuniculi (strain GB-M1) (Microsporidian parasite), this protein is Probable proteasome subunit beta type-1 (PRE3).